The following is a 274-amino-acid chain: Tropomyosin (274 aa).

The segment covering 1 to 35 (MKLEKDNAMDRADTLEQQNKEANNRAEKSEEEVHN) has biased composition (basic and acidic residues). The interval 1 to 45 (MKLEKDNAMDRADTLEQQNKEANNRAEKSEEEVHNLQKRMQQLEN) is disordered. Residues 1–274 (MKLEKDNAMD…DQTFSELSGY (274 aa)) are a coiled coil.

This sequence belongs to the tropomyosin family. In terms of assembly, homodimer.

Functionally, tropomyosin, in association with the troponin complex, plays a central role in the calcium dependent regulation of muscle contraction. This is Tropomyosin from Metapenaeus ensis (Greasyback shrimp).